The sequence spans 526 residues: Methane monooxygenase component A alpha chain (526 aa).

Positions 114, 144, and 147 each coordinate Fe cation. The active site involves Cys151. Fe cation is bound by residues Glu209, Glu243, and His246.

This sequence belongs to the TmoA/XamoA family. As to quaternary structure, m.trichosporium has two forms of methane monooxygenase, a soluble and a membrane-bound type. The soluble type consists of four components (A to D): protein A, comprising three chains, in an alpha-2, beta-2, gamma-2 configuration, is a nonheme iron protein containing an unusual mu-hydroxo bridge structure at its active site and interacts with both oxygen and methane. The cofactor is Fe cation.

It carries out the reaction methane + NADH + O2 + H(+) = methanol + NAD(+) + H2O. The enzyme catalyses methane + NADPH + O2 + H(+) = methanol + NADP(+) + H2O. Responsible for the initial oxygenation of methane to methanol in methanotrophs. It also catalyzes the monohydroxylation of a variety of unactivated alkenes, alicyclic, aromatic and heterocyclic compounds. This is Methane monooxygenase component A alpha chain (mmoX) from Methylosinus trichosporium.